The following is a 353-amino-acid chain: DNA polymerase IV (353 aa).

A UmuC domain is found at 4 to 185 (IIHVDMDCFF…LPLSKIPGVG (182 aa)). Positions 8 and 103 each coordinate Mg(2+). Residue Glu-104 is part of the active site.

Belongs to the DNA polymerase type-Y family. As to quaternary structure, monomer. It depends on Mg(2+) as a cofactor.

Its subcellular location is the cytoplasm. The enzyme catalyses DNA(n) + a 2'-deoxyribonucleoside 5'-triphosphate = DNA(n+1) + diphosphate. In terms of biological role, poorly processive, error-prone DNA polymerase involved in untargeted mutagenesis. Copies undamaged DNA at stalled replication forks, which arise in vivo from mismatched or misaligned primer ends. These misaligned primers can be extended by PolIV. Exhibits no 3'-5' exonuclease (proofreading) activity. May be involved in translesional synthesis, in conjunction with the beta clamp from PolIII. This chain is DNA polymerase IV, found in Serratia proteamaculans (strain 568).